The primary structure comprises 89 residues: Large ribosomal subunit protein eL34 (89 aa).

The segment at 1–22 (MPAPRYKSGSSKKVYRKAPGNS) is disordered.

It belongs to the eukaryotic ribosomal protein eL34 family.

The protein is Large ribosomal subunit protein eL34 of Methanococcus maripaludis (strain C5 / ATCC BAA-1333).